The sequence spans 380 residues: Chorismate synthase (380 aa).

Arginine 47 provides a ligand contact to NADP(+). FMN is bound by residues 124-126 (RSS), glycine 288, 303-307 (KPTST), and arginine 329.

Belongs to the chorismate synthase family. As to quaternary structure, homotetramer. It depends on FMNH2 as a cofactor.

The catalysed reaction is 5-O-(1-carboxyvinyl)-3-phosphoshikimate = chorismate + phosphate. It functions in the pathway metabolic intermediate biosynthesis; chorismate biosynthesis; chorismate from D-erythrose 4-phosphate and phosphoenolpyruvate: step 7/7. Catalyzes the anti-1,4-elimination of the C-3 phosphate and the C-6 proR hydrogen from 5-enolpyruvylshikimate-3-phosphate (EPSP) to yield chorismate, which is the branch point compound that serves as the starting substrate for the three terminal pathways of aromatic amino acid biosynthesis. This reaction introduces a second double bond into the aromatic ring system. The protein is Chorismate synthase of Leptospira borgpetersenii serovar Hardjo-bovis (strain JB197).